The primary structure comprises 668 residues: Metastasis-associated protein MTA2 (668 aa).

One can recognise a BAH domain in the interval 1–144; that stretch reads MAANMYRVGD…PVQKTLLADQ (144 aa). Phosphoserine occurs at positions 52 and 54. Positions 145–256 constitute an ELM2 domain; the sequence is GEIRVGCKFQ…KAMSTLVPQG (112 aa). N6-acetyllysine is present on lysine 152. In terms of domain architecture, SANT spans 263 to 315; it reads DEMEEWSASEAMLFEEALEKYGKDFNDIRQDFLPWKSLASIVQFYYMWKTTDR. The GATA-type; atypical zinc finger occupies 367–394; the sequence is CESCHTTQSAQWYAWGPPNMQCRLCASC. Residues 412 to 437 are disordered; sequence GAARGTTEPHSRGHLSRPEAQSLSPY. Phosphoserine is present on residues serine 433 and serine 435. At lysine 460 the chain carries N6-acetyllysine. Lysine 492 participates in a covalent cross-link: Glycyl lysine isopeptide (Lys-Gly) (interchain with G-Cter in SUMO2 and SUMO3); alternate. Lysine 492 is covalently cross-linked (Glycyl lysine isopeptide (Lys-Gly) (interchain with G-Cter in SUMO2); alternate). Lysine 508 participates in a covalent cross-link: Glycyl lysine isopeptide (Lys-Gly) (interchain with G-Cter in SUMO2). 2 positions are modified to N6-acetyllysine: lysine 522 and lysine 531. The residue at position 534 (threonine 534) is a Phosphothreonine. Residues lysine 559 and lysine 595 each participate in a glycyl lysine isopeptide (Lys-Gly) (interchain with G-Cter in SUMO2) cross-link. Disordered stretches follow at residues 580-599 and 647-668; these read ASGIRSSSQPAAKRQKLNPA and PPVPLPASSHPASTNEPIVLED.

The protein belongs to the metastasis-associated protein family. Component of the nucleosome remodeling and deacetylase (NuRD) repressor complex, composed of core proteins MTA1, MTA2, MTA3, RBBP4, RBBP7, HDAC1, HDAC2, MBD2, MBD3, and peripherally associated proteins CDK2AP1, CDK2AP2, GATAD2A, GATAD2B, CHD3, CHD4 and CHD5. The exact stoichiometry of the NuRD complex is unknown, and some subunits such as MBD2 and MBD3, GATAD2A and GATAD2B, and CHD3, CHD4 and CHD5 define mutually exclusive NuRD complexes. Interacts with CHD3. Interacts with CHD4. Interacts with GATAD2A. Interacts with HDAC7. Interacts with MBD3. Interacts with p53/TP53. Interacts with MINT. Interacts with PIMREG. Interacts with NACC2. Interacts with ERCC6. Interacts with PWWP2B. Interacts with transcription factor BCL11A.

It is found in the nucleus. In terms of biological role, may function as a transcriptional coregulator. Acts as a component of the histone deacetylase NuRD complex which participates in the remodeling of chromatin. This chain is Metastasis-associated protein MTA2 (Mta2), found in Mus musculus (Mouse).